The sequence spans 275 residues: MPDIPVSQPVNPGCDAPVGVFDSGVGGLSVLNEIRQTLPNESLLYLADCGHIPYGEKTPEFIIERCLIIADFFHGQGAKALVVACNTATAAGVAHIRQRYPDWPIVGMEPAVKPAAEATRSGVVGVLATTGTLQSARFAALLDRFASDVSVVTQPCPGLVELIETGDLVSPQIRQLLQRYVEPLLAARCDTIILGCTHYPFLKPLLREMLPASVTLIDTGAAVARQLQRLLSRSGLLASGPARDTLYWSSDIPDNFGKILPFLSQMSGNVRSFRL.

Residues 22–23 (DS) and 54–55 (YG) contribute to the substrate site. Catalysis depends on C85, which acts as the Proton donor/acceptor. Residue 86 to 87 (NT) participates in substrate binding. Residue C196 is the Proton donor/acceptor of the active site. Residue 197-198 (TH) participates in substrate binding.

It belongs to the aspartate/glutamate racemases family.

The catalysed reaction is L-glutamate = D-glutamate. The protein operates within cell wall biogenesis; peptidoglycan biosynthesis. Functionally, provides the (R)-glutamate required for cell wall biosynthesis. The protein is Glutamate racemase of Pseudomonas syringae pv. tomato (strain ATCC BAA-871 / DC3000).